Here is a 137-residue protein sequence, read N- to C-terminus: ATP synthase epsilon chain, chloroplastic (137 aa).

Belongs to the ATPase epsilon chain family. As to quaternary structure, F-type ATPases have 2 components, CF(1) - the catalytic core - and CF(0) - the membrane proton channel. CF(1) has five subunits: alpha(3), beta(3), gamma(1), delta(1), epsilon(1). CF(0) has three main subunits: a, b and c.

The protein localises to the plastid. It is found in the chloroplast thylakoid membrane. In terms of biological role, produces ATP from ADP in the presence of a proton gradient across the membrane. The sequence is that of ATP synthase epsilon chain, chloroplastic from Sorghum bicolor (Sorghum).